The chain runs to 136 residues: Small ribosomal subunit protein uS9 (136 aa).

The interval Lys-115–Arg-136 is disordered. Over residues Lys-117–Arg-136 the composition is skewed to basic residues.

Belongs to the universal ribosomal protein uS9 family.

The sequence is that of Small ribosomal subunit protein uS9 from Mycoplasmopsis pulmonis (strain UAB CTIP) (Mycoplasma pulmonis).